The sequence spans 318 residues: Malate dehydrogenase (318 aa).

Residues 10-15 (GGGQIG) and Asp34 contribute to the NAD(+) site. Substrate-binding residues include Arg83 and Arg89. NAD(+) contacts are provided by residues Asn96 and 119–121 (ISN). Substrate-binding residues include Asn121 and Arg152. The active-site Proton acceptor is His176.

This sequence belongs to the LDH/MDH superfamily. MDH type 3 family.

The catalysed reaction is (S)-malate + NAD(+) = oxaloacetate + NADH + H(+). In terms of biological role, catalyzes the reversible oxidation of malate to oxaloacetate. The protein is Malate dehydrogenase of Geotalea daltonii (strain DSM 22248 / JCM 15807 / FRC-32) (Geobacter daltonii).